The sequence spans 416 residues: Esterase FrsA (416 aa).

The interval 19 to 39 is disordered; that stretch reads ETSTLVRRTRHDQETQGLHST.

The protein belongs to the FrsA family.

It carries out the reaction a carboxylic ester + H2O = an alcohol + a carboxylate + H(+). Catalyzes the hydrolysis of esters. This Pectobacterium atrosepticum (strain SCRI 1043 / ATCC BAA-672) (Erwinia carotovora subsp. atroseptica) protein is Esterase FrsA.